Reading from the N-terminus, the 157-residue chain is Ribonuclease H (157 aa).

In terms of domain architecture, RNase H type-1 spans 3–144 (NSKTVHLYTD…CDELARDAAT (142 aa)). Residues aspartate 12, glutamate 50, aspartate 72, and aspartate 136 each contribute to the Mg(2+) site.

The protein belongs to the RNase H family. Monomer. The cofactor is Mg(2+).

The protein localises to the cytoplasm. It catalyses the reaction Endonucleolytic cleavage to 5'-phosphomonoester.. Endonuclease that specifically degrades the RNA of RNA-DNA hybrids. This is Ribonuclease H from Idiomarina loihiensis (strain ATCC BAA-735 / DSM 15497 / L2-TR).